A 313-amino-acid chain; its full sequence is uncharacterized protein (313 aa).

A signal peptide spans 1–24; that stretch reads MKRRRRWRGWLLFLALCFCLLCEA. N28, N43, N57, N77, N101, N102, N109, N149, N168, N215, N222, N251, N254, and N267 each carry an N-linked (GlcNAc...) asparagine; by host glycan. A disordered region spans residues 47-73; the sequence is ATTGTTTTSPNVTSTTSNTVTTPTTVS. Residues 90–114 are compositionally biased toward low complexity; that stretch reads STVSGTRNTRNNNTTTIGTNATSPS. Positions 90–117 are disordered; the sequence is STVSGTRNTRNNNTTTIGTNATSPSSSV.

Belongs to the HHV-5 US34A protein family.

This is an uncharacterized protein from Homo sapiens (Human).